A 465-amino-acid polypeptide reads, in one-letter code: Cysteine--tRNA ligase (465 aa).

Cys29 is a Zn(2+) binding site. A 'HIGH' region motif is present at residues 31-41 (PTVYNYIHIGN). Zn(2+)-binding residues include Cys209, His234, and Glu238. The short motif at 266-270 (KMSKS) is the 'KMSKS' region element. Residue Lys269 coordinates ATP. At Ser270 the chain carries Phosphoserine.

It belongs to the class-I aminoacyl-tRNA synthetase family. As to quaternary structure, monomer. The cofactor is Zn(2+).

It is found in the cytoplasm. It catalyses the reaction tRNA(Cys) + L-cysteine + ATP = L-cysteinyl-tRNA(Cys) + AMP + diphosphate. The protein is Cysteine--tRNA ligase of Bacillus cereus (strain AH187).